The sequence spans 366 residues: Alanine racemase (366 aa).

Lys40 acts as the Proton acceptor; specific for D-alanine in catalysis. Lys40 bears the N6-(pyridoxal phosphate)lysine mark. Arg136 contributes to the substrate binding site. Tyr263 functions as the Proton acceptor; specific for L-alanine in the catalytic mechanism. Met310 provides a ligand contact to substrate.

It belongs to the alanine racemase family. Requires pyridoxal 5'-phosphate as cofactor.

The enzyme catalyses L-alanine = D-alanine. It participates in amino-acid biosynthesis; D-alanine biosynthesis; D-alanine from L-alanine: step 1/1. Catalyzes the interconversion of L-alanine and D-alanine. May also act on other amino acids. The chain is Alanine racemase (alr) from Streptococcus equi subsp. equi (strain 4047).